A 352-amino-acid chain; its full sequence is 4-hydroxy-2-oxovalerate aldolase (352 aa).

Residues 13-265 form the Pyruvate carboxyltransferase domain; sequence VRLTDTSLRD…KTGIDFFDIA (253 aa). 21-22 is a binding site for substrate; it reads RD. A Mn(2+)-binding site is contributed by D22. The active-site Proton acceptor is H25. The substrate site is built by S175 and H204. Mn(2+) is bound by residues H204 and H206. Y295 is a binding site for substrate.

This sequence belongs to the 4-hydroxy-2-oxovalerate aldolase family.

The catalysed reaction is (S)-4-hydroxy-2-oxopentanoate = acetaldehyde + pyruvate. The chain is 4-hydroxy-2-oxovalerate aldolase from Mycolicibacterium paratuberculosis (strain ATCC BAA-968 / K-10) (Mycobacterium paratuberculosis).